A 335-amino-acid chain; its full sequence is Teichoic acids export ATP-binding protein TagH (335 aa).

Residues 26–246 (IKGLFMPKSQ…YDEFVKWFNK (221 aa)) form the ABC transporter domain. An ATP-binding site is contributed by 60 to 67 (GINGSGKS).

Belongs to the ABC transporter superfamily. Teichoic acids exporter (TC 3.A.1.104.1) family. The complex is composed of two ATP-binding proteins (TagH) and two transmembrane proteins (TagG).

It is found in the cell membrane. It carries out the reaction ATP + H2O + teichoic acidSide 1 = ADP + phosphate + teichoic acidSide 2.. Part of the ABC transporter complex TagGH involved in teichoic acids export. Responsible for energy coupling to the transport system. This Listeria innocua serovar 6a (strain ATCC BAA-680 / CLIP 11262) protein is Teichoic acids export ATP-binding protein TagH.